Consider the following 294-residue polypeptide: Probable 2-(5''-triphosphoribosyl)-3'-dephosphocoenzyme-A synthase (294 aa).

It belongs to the CitG/MdcB family.

The enzyme catalyses 3'-dephospho-CoA + ATP = 2'-(5''-triphospho-alpha-D-ribosyl)-3'-dephospho-CoA + adenine. The polypeptide is Probable 2-(5''-triphosphoribosyl)-3'-dephosphocoenzyme-A synthase (Streptococcus equi subsp. equi (strain 4047)).